The sequence spans 184 residues: Cytidylate kinase (184 aa).

Residue 8 to 16 (GQPGSGKTT) participates in ATP binding.

The protein belongs to the cytidylate kinase family. Type 2 subfamily.

It is found in the cytoplasm. It catalyses the reaction CMP + ATP = CDP + ADP. The enzyme catalyses dCMP + ATP = dCDP + ADP. The protein is Cytidylate kinase of Pyrobaculum calidifontis (strain DSM 21063 / JCM 11548 / VA1).